The following is a 626-amino-acid chain: Chaperone protein HtpG (626 aa).

Positions 1–339 (MSQNQETRGF…SNDLPLNVSR (339 aa)) are a; substrate-binding. The b stretch occupies residues 340 to 555 (EILQDNKITA…NDQMTTQMAK (216 aa)). The interval 556-626 (LFAAAGQPVP…FIKRINKLLG (71 aa)) is c.

Belongs to the heat shock protein 90 family. Homodimer.

It is found in the cytoplasm. In terms of biological role, molecular chaperone. Has ATPase activity. In Haemophilus influenzae (strain PittGG), this protein is Chaperone protein HtpG.